The following is a 435-amino-acid chain: 3-phosphoshikimate 1-carboxyvinyltransferase (435 aa).

3-phosphoshikimate is bound by residues Lys-21, Ser-22, and Arg-26. Lys-21 serves as a coordination point for phosphoenolpyruvate. Residues Gly-99 and Arg-127 each coordinate phosphoenolpyruvate. 3-phosphoshikimate contacts are provided by Ser-173, Gln-175, Asp-323, and Lys-350. Gln-175 contacts phosphoenolpyruvate. The active-site Proton acceptor is Asp-323. Phosphoenolpyruvate contacts are provided by Arg-354 and Arg-396.

Belongs to the EPSP synthase family. Monomer.

It is found in the cytoplasm. It carries out the reaction 3-phosphoshikimate + phosphoenolpyruvate = 5-O-(1-carboxyvinyl)-3-phosphoshikimate + phosphate. Its pathway is metabolic intermediate biosynthesis; chorismate biosynthesis; chorismate from D-erythrose 4-phosphate and phosphoenolpyruvate: step 6/7. Its function is as follows. Catalyzes the transfer of the enolpyruvyl moiety of phosphoenolpyruvate (PEP) to the 5-hydroxyl of shikimate-3-phosphate (S3P) to produce enolpyruvyl shikimate-3-phosphate and inorganic phosphate. This chain is 3-phosphoshikimate 1-carboxyvinyltransferase, found in Akkermansia muciniphila (strain ATCC BAA-835 / DSM 22959 / JCM 33894 / BCRC 81048 / CCUG 64013 / CIP 107961 / Muc).